Here is a 413-residue protein sequence, read N- to C-terminus: MSFFQSSKWSLIAGGITAPSGFKASGVSAGLKPSKKLDLALLVTSPNAQCSGTFTQSFVRAKCINLCLERLSKTAGKVRAVLVNSGHANACTGNRGIDDSLIATRALAEKLDLLEEEVLICSTGVIGEPIPMQKLLKGLDPLVMNLSKEGGSDAAKAILTTDLIEKEIAIEGYLGDRLIRIGGMAKGSGMIHPNMATMLGFLTCDAGLPKDVWDAMIDRVVDCSFNAISVDGDTSTNDSFLAFAQGDILDSQHFNELEIGLKLVSTYLAQSIVRDGEGANCLFEVKVKGTSKIAHAQIIARQICSSCLVKTAIHGCDPNWGRILSAAGSTGIPFSLDEVSIWIGSFQVMSNGQPVEFNRKLVIRYMKEIIKGNNASDEKLIISLVVGRSEIEAIAWGCDLSSEYIHINADYTT.

Substrate is bound by residues Thr-160, Lys-186, Thr-197, Glu-277, Asn-408, and Thr-413. Thr-197 acts as the Nucleophile in catalysis.

Belongs to the ArgJ family. Heterotetramer of two alpha and two beta chains.

The protein localises to the cytoplasm. It catalyses the reaction N(2)-acetyl-L-ornithine + L-glutamate = N-acetyl-L-glutamate + L-ornithine. It carries out the reaction L-glutamate + acetyl-CoA = N-acetyl-L-glutamate + CoA + H(+). The protein operates within amino-acid biosynthesis; L-arginine biosynthesis; L-ornithine and N-acetyl-L-glutamate from L-glutamate and N(2)-acetyl-L-ornithine (cyclic): step 1/1. It participates in amino-acid biosynthesis; L-arginine biosynthesis; N(2)-acetyl-L-ornithine from L-glutamate: step 1/4. Functionally, catalyzes two activities which are involved in the cyclic version of arginine biosynthesis: the synthesis of N-acetylglutamate from glutamate and acetyl-CoA as the acetyl donor, and of ornithine by transacetylation between N(2)-acetylornithine and glutamate. The chain is Arginine biosynthesis bifunctional protein ArgJ from Prochlorococcus marinus (strain SARG / CCMP1375 / SS120).